Reading from the N-terminus, the 500-residue chain is Probable malate:quinone oxidoreductase (500 aa).

It belongs to the MQO family. The cofactor is FAD.

The enzyme catalyses (S)-malate + a quinone = a quinol + oxaloacetate. It participates in carbohydrate metabolism; tricarboxylic acid cycle; oxaloacetate from (S)-malate (quinone route): step 1/1. The protein is Probable malate:quinone oxidoreductase of Bacillus cereus (strain G9842).